Reading from the N-terminus, the 963-residue chain is Glycine dehydrogenase (decarboxylating) (963 aa).

Residue Lys710 is modified to N6-(pyridoxal phosphate)lysine.

Belongs to the GcvP family. As to quaternary structure, the glycine cleavage system is composed of four proteins: P, T, L and H. The cofactor is pyridoxal 5'-phosphate.

It catalyses the reaction N(6)-[(R)-lipoyl]-L-lysyl-[glycine-cleavage complex H protein] + glycine + H(+) = N(6)-[(R)-S(8)-aminomethyldihydrolipoyl]-L-lysyl-[glycine-cleavage complex H protein] + CO2. The glycine cleavage system catalyzes the degradation of glycine. The P protein binds the alpha-amino group of glycine through its pyridoxal phosphate cofactor; CO(2) is released and the remaining methylamine moiety is then transferred to the lipoamide cofactor of the H protein. The polypeptide is Glycine dehydrogenase (decarboxylating) (Pseudoalteromonas translucida (strain TAC 125)).